We begin with the raw amino-acid sequence, 383 residues long: Dual-specificity RNA methyltransferase RlmN (383 aa).

Catalysis depends on Glu-95, which acts as the Proton acceptor. The Radical SAM core domain occupies 101–349 (EETRGTLCVS…TTVRKTRGDD (249 aa)). A disulfide bond links Cys-108 and Cys-354. The [4Fe-4S] cluster site is built by Cys-115, Cys-119, and Cys-122. Residues 180 to 181 (GE), Ser-212, 234 to 236 (SLH), and Asn-311 each bind S-adenosyl-L-methionine. The S-methylcysteine intermediate role is filled by Cys-354.

This sequence belongs to the radical SAM superfamily. RlmN family. [4Fe-4S] cluster is required as a cofactor.

It is found in the cytoplasm. It catalyses the reaction adenosine(2503) in 23S rRNA + 2 reduced [2Fe-2S]-[ferredoxin] + 2 S-adenosyl-L-methionine = 2-methyladenosine(2503) in 23S rRNA + 5'-deoxyadenosine + L-methionine + 2 oxidized [2Fe-2S]-[ferredoxin] + S-adenosyl-L-homocysteine. The enzyme catalyses adenosine(37) in tRNA + 2 reduced [2Fe-2S]-[ferredoxin] + 2 S-adenosyl-L-methionine = 2-methyladenosine(37) in tRNA + 5'-deoxyadenosine + L-methionine + 2 oxidized [2Fe-2S]-[ferredoxin] + S-adenosyl-L-homocysteine. Functionally, specifically methylates position 2 of adenine 2503 in 23S rRNA and position 2 of adenine 37 in tRNAs. m2A2503 modification seems to play a crucial role in the proofreading step occurring at the peptidyl transferase center and thus would serve to optimize ribosomal fidelity. The polypeptide is Dual-specificity RNA methyltransferase RlmN (Paraburkholderia phytofirmans (strain DSM 17436 / LMG 22146 / PsJN) (Burkholderia phytofirmans)).